We begin with the raw amino-acid sequence, 164 residues long: Phosphopantetheine adenylyltransferase (164 aa).

Position 10 (Ser10) interacts with substrate. ATP contacts are provided by residues 10 to 11 and His18; that span reads SF. Substrate-binding residues include Lys42, Thr79, and Arg93. ATP-binding positions include 94 to 96, Glu104, and 129 to 135; these read GLR and VRPITAS.

It belongs to the bacterial CoaD family. In terms of assembly, homohexamer. Requires Mg(2+) as cofactor.

It is found in the cytoplasm. The catalysed reaction is (R)-4'-phosphopantetheine + ATP + H(+) = 3'-dephospho-CoA + diphosphate. It functions in the pathway cofactor biosynthesis; coenzyme A biosynthesis; CoA from (R)-pantothenate: step 4/5. In terms of biological role, reversibly transfers an adenylyl group from ATP to 4'-phosphopantetheine, yielding dephospho-CoA (dPCoA) and pyrophosphate. The protein is Phosphopantetheine adenylyltransferase of Bradyrhizobium sp. (strain ORS 278).